Consider the following 53-residue polypeptide: Beta-defensin C7 (53 aa).

3 disulfides stabilise this stretch: Cys-20/Cys-49, Cys-27/Cys-42, and Cys-32/Cys-50.

The protein belongs to the beta-defensin family.

The protein resides in the secreted. Functionally, has bactericidal activity. The sequence is that of Beta-defensin C7 from Bos taurus (Bovine).